Reading from the N-terminus, the 205-residue chain is Imidazoleglycerol-phosphate dehydratase (205 aa).

The protein belongs to the imidazoleglycerol-phosphate dehydratase family.

The protein localises to the cytoplasm. The catalysed reaction is D-erythro-1-(imidazol-4-yl)glycerol 3-phosphate = 3-(imidazol-4-yl)-2-oxopropyl phosphate + H2O. It participates in amino-acid biosynthesis; L-histidine biosynthesis; L-histidine from 5-phospho-alpha-D-ribose 1-diphosphate: step 6/9. This is Imidazoleglycerol-phosphate dehydratase from Chloroflexus aggregans (strain MD-66 / DSM 9485).